The primary structure comprises 443 residues: Glutamyl-tRNA reductase (443 aa).

Substrate contacts are provided by residues 49–52 (TCNR), Ser-109, 114–116 (EPQ), and Gln-120. Cys-50 acts as the Nucleophile in catalysis. NADP(+) is bound at residue 189 to 194 (GAGKMC). Positions 421–443 (PDSQQTGGDSVEKDADSKQDLTS) are disordered. Basic and acidic residues predominate over residues 430–443 (SVEKDADSKQDLTS).

It belongs to the glutamyl-tRNA reductase family. In terms of assembly, homodimer.

The catalysed reaction is (S)-4-amino-5-oxopentanoate + tRNA(Glu) + NADP(+) = L-glutamyl-tRNA(Glu) + NADPH + H(+). Its pathway is porphyrin-containing compound metabolism; protoporphyrin-IX biosynthesis; 5-aminolevulinate from L-glutamyl-tRNA(Glu): step 1/2. Catalyzes the NADPH-dependent reduction of glutamyl-tRNA(Glu) to glutamate 1-semialdehyde (GSA). This chain is Glutamyl-tRNA reductase, found in Syntrophotalea carbinolica (strain DSM 2380 / NBRC 103641 / GraBd1) (Pelobacter carbinolicus).